The sequence spans 303 residues: NAC domain-containing protein 48 (303 aa).

In terms of domain architecture, NAC spans leucine 9 to lysine 159.

As to quaternary structure, interacts with NAC071. Widely expressed.

It is found in the nucleus. Transcription activator that binds to the promoter of the stress response gene LEA19. Involved in tolerance to abiotic stresses. Transcription activator involved in response to abiotic and biotic stresses. Involved in drought and salt stress responses, and defense response to the rice blast fungus. Transcription activator involved tolerance to cold and salt stresses. Transcription activator involved in tolerance to drought stress. Targets directly and activates genes involved in membrane modification, nicotianamine (NA) biosynthesis, glutathione relocation, accumulation of phosphoadenosine phosphosulfate and glycosylation in roots. Controls root growth at early vegetative stage through chromatin modification and histone lysine deacytaltion by HDAC1. This Oryza sativa subsp. japonica (Rice) protein is NAC domain-containing protein 48.